The primary structure comprises 176 residues: ATP-dependent protease subunit HslV (176 aa).

Threonine 2 is a catalytic residue. Na(+)-binding residues include glycine 157, cysteine 160, and threonine 163.

This sequence belongs to the peptidase T1B family. HslV subfamily. A double ring-shaped homohexamer of HslV is capped on each side by a ring-shaped HslU homohexamer. The assembly of the HslU/HslV complex is dependent on binding of ATP.

It localises to the cytoplasm. The catalysed reaction is ATP-dependent cleavage of peptide bonds with broad specificity.. Allosterically activated by HslU binding. In terms of biological role, protease subunit of a proteasome-like degradation complex believed to be a general protein degrading machinery. The sequence is that of ATP-dependent protease subunit HslV from Pseudomonas putida (strain ATCC 47054 / DSM 6125 / CFBP 8728 / NCIMB 11950 / KT2440).